The following is a 282-amino-acid chain: Glutamyl endopeptidase (282 aa).

Positions 1-27 (MKKRFLSICTMTIAALATTTMVNTSYA) are cleaved as a signal peptide. Residues 28 to 66 (KTDTESHNHSSLGTENKNVLDINSSSHNIKPSQNKSYPS) constitute a propeptide that is removed on maturation. Residues His-117, Asp-159, and Ser-235 each act as charge relay system in the active site.

The protein belongs to the peptidase S1B family. As to quaternary structure, monomer.

It localises to the secreted. The enzyme catalyses Preferential cleavage: Glu-|-Xaa, Asp-|-Xaa.. Its activity is regulated as follows. Inhibited by diisopropyl fluorophosphate. Its function is as follows. Exhibits a significant hydrolytic activity for the carbonyl side of glutamic acid. Shows activity toward human fibronectin and type 1 collagen. In Staphylococcus epidermidis, this protein is Glutamyl endopeptidase (gseA).